Consider the following 561-residue polypeptide: uncharacterized protein (561 aa).

Helical transmembrane passes span 27 to 49 (ILEF…GLLI), 54 to 71 (FFGI…ALAL), 83 to 105 (LVYQ…SEFF), 115 to 137 (LTLF…IKLF), 142 to 162 (IIGA…AAMV), and 177 to 199 (VVGY…AIGA). The region spanning 292–373 (QQDVPIEDTD…MSEVRRFLGD (82 aa)) is the RCK C-terminal domain. The next 4 helical transmembrane spans lie at 383 to 405 (LMPF…PLPG), 409 to 428 (LSLG…GALN), 441 to 463 (ASRT…SAGV), and 478 to 500 (IAGG…MPLF).

Belongs to the AAE transporter (TC 2.A.81) family.

The protein localises to the cell membrane. This is an uncharacterized protein from Corynebacterium diphtheriae (strain ATCC 700971 / NCTC 13129 / Biotype gravis).